The primary structure comprises 318 residues: Beta-sarcoglycan (318 aa).

The interval 1 to 32 is disordered; the sequence is MAAAAAAAAEQQSSNGPVKKSMREKAVERRNV. The Cytoplasmic segment spans residues 1–65; that stretch reads MAAAAAAAAE…GLRGRKGNLA (65 aa). The segment covering 21-32 has biased composition (basic and acidic residues); sequence SMREKAVERRNV. Residues 66-86 traverse the membrane as a helical; Signal-anchor for type II membrane protein segment; sequence ICVIVLLFLLAVINLIITLVI. The Extracellular segment spans residues 87–318; sequence WAVIRIGPNG…VSDNPCGNTH (232 aa). N-linked (GlcNAc...) asparagine glycosylation is found at Asn158, Asn211, and Asn258. 2 cysteine pairs are disulfide-bonded: Cys288/Cys314 and Cys290/Cys307.

This sequence belongs to the sarcoglycan beta/delta/gamma/zeta family. As to quaternary structure, cross-link to form 2 major subcomplexes: one consisting of SGCB, SGCD and SGCG and the other consisting of SGCB and SGCD. The association between SGCB and SGCG is particularly strong while SGCA is loosely associated with the other sarcoglycans. In terms of processing, disulfide bonds are present.

The protein resides in the cell membrane. Its subcellular location is the sarcolemma. It localises to the cytoplasm. The protein localises to the cytoskeleton. In terms of biological role, component of the sarcoglycan complex, a subcomplex of the dystrophin-glycoprotein complex which forms a link between the F-actin cytoskeleton and the extracellular matrix. The polypeptide is Beta-sarcoglycan (SGCB) (Oryctolagus cuniculus (Rabbit)).